Reading from the N-terminus, the 356-residue chain is D-alanine--D-alanine ligase (356 aa).

In terms of domain architecture, ATP-grasp spans 134-339; sequence KQLFATRGLP…YSELITDLIN (206 aa). 167 to 222 lines the ATP pocket; sequence EGKLTYPVFVKPANLGSSVGISKCTDSETLIHGIEEALQFDRKLVIEQGVNAREVE. Mg(2+)-binding residues include D293, E306, and N308.

The protein belongs to the D-alanine--D-alanine ligase family. The cofactor is Mg(2+). It depends on Mn(2+) as a cofactor.

The protein localises to the cytoplasm. The catalysed reaction is 2 D-alanine + ATP = D-alanyl-D-alanine + ADP + phosphate + H(+). It functions in the pathway cell wall biogenesis; peptidoglycan biosynthesis. Functionally, cell wall formation. The protein is D-alanine--D-alanine ligase of Macrococcus caseolyticus (strain JCSC5402) (Macrococcoides caseolyticum).